The following is a 315-amino-acid chain: Ribosomal RNA small subunit methyltransferase H (315 aa).

Residues 35-37 (GGH), D55, F80, D102, and Q109 contribute to the S-adenosyl-L-methionine site.

The protein belongs to the methyltransferase superfamily. RsmH family.

The protein localises to the cytoplasm. It carries out the reaction cytidine(1402) in 16S rRNA + S-adenosyl-L-methionine = N(4)-methylcytidine(1402) in 16S rRNA + S-adenosyl-L-homocysteine + H(+). In terms of biological role, specifically methylates the N4 position of cytidine in position 1402 (C1402) of 16S rRNA. This is Ribosomal RNA small subunit methyltransferase H from Buchnera aphidicola subsp. Baizongia pistaciae (strain Bp).